Consider the following 100-residue polypeptide: NAD(P)H-quinone oxidoreductase subunit 4L, chloroplastic (100 aa).

3 helical membrane passes run 1–21 (MLEH…FGLI), 29–49 (ALMC…TFSN), and 60–80 (IFAI…LAIV).

The protein belongs to the complex I subunit 4L family. As to quaternary structure, NDH is composed of at least 16 different subunits, 5 of which are encoded in the nucleus.

The protein resides in the plastid. The protein localises to the chloroplast thylakoid membrane. It catalyses the reaction a plastoquinone + NADH + (n+1) H(+)(in) = a plastoquinol + NAD(+) + n H(+)(out). It carries out the reaction a plastoquinone + NADPH + (n+1) H(+)(in) = a plastoquinol + NADP(+) + n H(+)(out). Functionally, NDH shuttles electrons from NAD(P)H:plastoquinone, via FMN and iron-sulfur (Fe-S) centers, to quinones in the photosynthetic chain and possibly in a chloroplast respiratory chain. The immediate electron acceptor for the enzyme in this species is believed to be plastoquinone. Couples the redox reaction to proton translocation, and thus conserves the redox energy in a proton gradient. This chain is NAD(P)H-quinone oxidoreductase subunit 4L, chloroplastic, found in Physcomitrium patens (Spreading-leaved earth moss).